We begin with the raw amino-acid sequence, 273 residues long: 2,3,4,5-tetrahydropyridine-2,6-dicarboxylate N-succinyltransferase (273 aa).

Substrate is bound by residues Arg104 and Asp141.

This sequence belongs to the transferase hexapeptide repeat family. In terms of assembly, homotrimer.

Its subcellular location is the cytoplasm. It catalyses the reaction (S)-2,3,4,5-tetrahydrodipicolinate + succinyl-CoA + H2O = (S)-2-succinylamino-6-oxoheptanedioate + CoA. It functions in the pathway amino-acid biosynthesis; L-lysine biosynthesis via DAP pathway; LL-2,6-diaminopimelate from (S)-tetrahydrodipicolinate (succinylase route): step 1/3. The protein is 2,3,4,5-tetrahydropyridine-2,6-dicarboxylate N-succinyltransferase of Buchnera aphidicola subsp. Schizaphis graminum (strain Sg).